The sequence spans 109 residues: Translation initiation factor IF-1, chloroplastic (109 aa).

The S1-like domain maps to Lys-18 to Lys-93.

This sequence belongs to the IF-1 family. In terms of assembly, component of the 30S ribosomal translation pre-initiation complex which assembles on the 30S ribosome in the order IF-2 and IF-3, IF-1 and N-formylmethionyl-tRNA(fMet); mRNA recruitment can occur at any time during PIC assembly.

It is found in the plastid. The protein localises to the chloroplast. Its function is as follows. One of the essential components for the initiation of protein synthesis. Stabilizes the binding of IF-2 and IF-3 on the 30S subunit to which N-formylmethionyl-tRNA(fMet) subsequently binds. Helps modulate mRNA selection, yielding the 30S pre-initiation complex (PIC). Upon addition of the 50S ribosomal subunit IF-1, IF-2 and IF-3 are released leaving the mature 70S translation initiation complex. This is Translation initiation factor IF-1, chloroplastic from Tupiella akineta (Green alga).